The sequence spans 95 residues: Protein RALF-like 16 (95 aa).

Positions 1-29 (MVAYEKSPIVFLFATMMLVMFLFCGSGEA) are cleaved as a signal peptide. Disulfide bonds link C45-C53 and C65-C71.

This sequence belongs to the plant rapid alkalinization factor (RALF) family.

It is found in the secreted. Its function is as follows. Cell signaling peptide that may regulate plant stress, growth, and development. Mediates a rapid alkalinization of extracellular space by mediating a transient increase in the cytoplasmic Ca(2+) concentration leading to a calcium-dependent signaling events through a cell surface receptor and a concomitant activation of some intracellular mitogen-activated protein kinases. The sequence is that of Protein RALF-like 16 (RALFL16) from Arabidopsis thaliana (Mouse-ear cress).